Reading from the N-terminus, the 391-residue chain is tRNA-specific 2-thiouridylase MnmA (391 aa).

ATP contacts are provided by residues 35–42 (GLSGGVDS) and L61. C122 acts as the Nucleophile in catalysis. A disulfide bridge links C122 with C221. G147 serves as a coordination point for ATP. The interval 171–173 (KDQ) is interaction with tRNA. The active-site Cysteine persulfide intermediate is the C221. The tract at residues 328–329 (RY) is interaction with tRNA.

Belongs to the MnmA/TRMU family.

The protein localises to the cytoplasm. The catalysed reaction is S-sulfanyl-L-cysteinyl-[protein] + uridine(34) in tRNA + AH2 + ATP = 2-thiouridine(34) in tRNA + L-cysteinyl-[protein] + A + AMP + diphosphate + H(+). Its function is as follows. Catalyzes the 2-thiolation of uridine at the wobble position (U34) of tRNA, leading to the formation of s(2)U34. The sequence is that of tRNA-specific 2-thiouridylase MnmA from Synechococcus sp. (strain CC9311).